We begin with the raw amino-acid sequence, 155 residues long: Aspartate carbamoyltransferase regulatory chain (155 aa).

Residues cysteine 113, cysteine 118, cysteine 139, and cysteine 142 each coordinate Zn(2+).

It belongs to the PyrI family. As to quaternary structure, contains catalytic and regulatory chains. Zn(2+) serves as cofactor.

In terms of biological role, involved in allosteric regulation of aspartate carbamoyltransferase. This is Aspartate carbamoyltransferase regulatory chain from Methanospirillum hungatei JF-1 (strain ATCC 27890 / DSM 864 / NBRC 100397 / JF-1).